The sequence spans 686 residues: MANDPRKLLVTCALPYANGSIHLGHMLEHIQADIWVRYQRLRGNTVNFICADDAHGTPIMLKAQQMGITPEEMIAAVSEEHQKDFAGFDISFDNYHSTHSEENRELASHIYLELKKNGFISSRTISQLFDPEKEMFLPDRFVKGTCPKCKSEDQYGDNCDNCGETYSPTELIDPKSAVSGATPVMKDSEHFFFDLPQFESMLKEWTRSGSLQSETANKMQEWFESGLQQWDISRDAPYFGFEIPGEENKFFYVWLDAPVGYMASFKNLCDKTEGLDFDEYWKKDSSTELYHFIGKDIVYFHSLFWPAMLEGSGFRKPNNVFVHGYVTVNGAKMSKSKGTFVKASTYLKHLDPECLRYYYAAKLNSRIDDLDLNLEDFTQRVNADVVNKIVNLASRNAGFISKRFEGKLAENFAEPELYNEFVAAADRIAELYETREFGRAIREITALADKANQYVDEKAPWVVAKEEGKDQELQEICSVGINLFRVLMTYLKPVMPALAARTEAFLNQELTWEGIAAPLTGHEITKFKALFNRIDPKNIEAMIEASKEDAAAEMAAKEKAEAEKNKASQTELDKDPIAEEIEFDAFAAVDMRIARIISCEEVPKANKLLKFQLDIGGETRQVFSGIKSAYKPEELEGKLTVMVANLKPRKMKFGMSEGMILAAGPGGSDLWILEPHEGAQPGMRVM.

The short motif at Pro-15–His-25 is the 'HIGH' region element. Positions 146, 149, 159, and 162 each coordinate Zn(2+). The short motif at Lys-332–Ser-336 is the 'KMSKS' region element. Position 335 (Lys-335) interacts with ATP. A tRNA-binding domain is found at Ala-585 to Met-686.

The protein belongs to the class-I aminoacyl-tRNA synthetase family. MetG type 1 subfamily. As to quaternary structure, homodimer. The cofactor is Zn(2+).

The protein resides in the cytoplasm. The catalysed reaction is tRNA(Met) + L-methionine + ATP = L-methionyl-tRNA(Met) + AMP + diphosphate. In terms of biological role, is required not only for elongation of protein synthesis but also for the initiation of all mRNA translation through initiator tRNA(fMet) aminoacylation. The protein is Methionine--tRNA ligase of Vibrio campbellii (strain ATCC BAA-1116).